We begin with the raw amino-acid sequence, 466 residues long: Ribulose bisphosphate carboxylase large chain (466 aa).

Lys5 carries the N6,N6,N6-trimethyllysine modification. Residues Asn114 and Thr164 each coordinate substrate. Lys166 serves as the catalytic Proton acceptor. Lys168 provides a ligand contact to substrate. The Mg(2+) site is built by Lys192, Asp194, and Glu195. The residue at position 192 (Lys192) is an N6-carboxylysine. The active-site Proton acceptor is His285. Substrate is bound by residues Arg286, His318, and Ser370.

It belongs to the RuBisCO large chain family. Type I subfamily. In terms of assembly, heterohexadecamer of 8 large chains and 8 small chains; disulfide-linked. The disulfide link is formed within the large subunit homodimers. Requires Mg(2+) as cofactor. The disulfide bond which can form in the large chain dimeric partners within the hexadecamer appears to be associated with oxidative stress and protein turnover.

It is found in the plastid. It localises to the chloroplast. The enzyme catalyses 2 (2R)-3-phosphoglycerate + 2 H(+) = D-ribulose 1,5-bisphosphate + CO2 + H2O. It catalyses the reaction D-ribulose 1,5-bisphosphate + O2 = 2-phosphoglycolate + (2R)-3-phosphoglycerate + 2 H(+). Its function is as follows. RuBisCO catalyzes two reactions: the carboxylation of D-ribulose 1,5-bisphosphate, the primary event in carbon dioxide fixation, as well as the oxidative fragmentation of the pentose substrate in the photorespiration process. Both reactions occur simultaneously and in competition at the same active site. This is Ribulose bisphosphate carboxylase large chain from Adoxa moschatellina (Moschatel).